The following is a 209-amino-acid chain: Protein-L-isoaspartate O-methyltransferase (209 aa).

S59 is an active-site residue.

The protein belongs to the methyltransferase superfamily. L-isoaspartyl/D-aspartyl protein methyltransferase family. As to quaternary structure, monomer.

It is found in the cytoplasm. The enzyme catalyses [protein]-L-isoaspartate + S-adenosyl-L-methionine = [protein]-L-isoaspartate alpha-methyl ester + S-adenosyl-L-homocysteine. In terms of biological role, catalyzes the methyl esterification of L-isoaspartyl residues in peptides and proteins that result from spontaneous decomposition of normal L-aspartyl and L-asparaginyl residues. It plays a role in the repair and/or degradation of damaged proteins. This chain is Protein-L-isoaspartate O-methyltransferase (pcm), found in Helicobacter pylori (strain J99 / ATCC 700824) (Campylobacter pylori J99).